Here is a 692-residue protein sequence, read N- to C-terminus: MSEAKSEMYYSLLEWFKTLNLSAAHNNAEELADGLALAQALNQFAADFFTDSWLAKIKASAVGSNWRLRMSNLKKVTQSLYDYYSEVMNYTLSDFVRPDLQLIAEKCDQVELERLLQLVLGCAVNCAKKQSYITEIMGLEEELQANIMRALQELESTGLVAGERSPSSSASGGAGSGGAVNSLSRNSLSVKALQEERDAMAQKCFETEKKMLLLLDEKTNLQQELQKIQQEFARLEINTTAIGDDGVSLGPVQAGSVRFNEMRRQLDLLKEELLQSEGAREDLKLKAVQQESDLVHMQQRIDELLKSSAEVTTLKDEVDVLRESNDKLKICEAQLDTYKKKLEDYNDLKKQIKILEERSADYVQQNAQFEDDAKRYANTKGQIELFKKEIQDLHSKLDIESGKNVKLEFDNKNLESKNLALQRAKESLVKERDNLRETVDELKCGHLTNNSGLTGCVEGTTMSRELQPTAMMDKIQRLEAENKALREGQGGQTALAQLLDDANKRCEHLRDQLKSANERILSLSHASQSDDPILKENEFAKQIKQLMELNEQKTLQLEEAVTQNASYQSKVIQLETSLSSREQEILACDAKYRKCVQKAKEIIKNIDPHIANAIDASALEKNMVDVVDEESKPKMSVMEEQLMTTAFYRLGVNAQRDAVDSKLAILMGSGQTFLARQRQSAPRKSLSAMKSK.

The Calponin-homology (CH) domain occupies S6–A123. Positions E135 to T576 form a coiled coil. Positions A161–V180 are disordered.

The protein belongs to the hook family. As to quaternary structure, homodimer. Interacts with microtubules via its N-terminus.

The protein localises to the cytoplasm. It localises to the cytoskeleton. It is found in the endosome. Its subcellular location is the synapse. Functionally, involved in endocytic trafficking by stabilizing organelles of the endocytic pathway. Probably acts as a cytoskeletal linker protein required to tether endosome vesicles to the cytoskeleton. Involved in modulation of endocytosis at stages required for down-regulation of membrane proteins that control synapse size. Not involved in synaptic vesicle recycling. Required in R7 cells for boss endocytosis into multivesicular bodies (MVBs). Has a role in regulating adult longevity. The protein is Protein hook of Drosophila willistoni (Fruit fly).